A 300-amino-acid polypeptide reads, in one-letter code: Ribosomal protein L11 methyltransferase (300 aa).

Residues Thr-152, Gly-173, Asp-195, and Asn-234 each coordinate S-adenosyl-L-methionine.

This sequence belongs to the methyltransferase superfamily. PrmA family.

The protein resides in the cytoplasm. The enzyme catalyses L-lysyl-[protein] + 3 S-adenosyl-L-methionine = N(6),N(6),N(6)-trimethyl-L-lysyl-[protein] + 3 S-adenosyl-L-homocysteine + 3 H(+). Functionally, methylates ribosomal protein L11. The polypeptide is Ribosomal protein L11 methyltransferase (Burkholderia pseudomallei (strain K96243)).